The following is a 341-amino-acid chain: Very-long-chain 3-oxoacyl-CoA reductase (341 aa).

Residues 17–37 (ALYGALLLGVYKLTTFALSLV) form a helical membrane-spanning segment. NADP(+)-binding residues include Val-63, Asp-117, Asn-144, Tyr-218, Lys-222, Val-251, and Ser-253. The Proton donor role is filled by Tyr-218. The active-site Lowers pKa of active site Tyr is the Lys-222.

It belongs to the short-chain dehydrogenases/reductases (SDR) family.

Its subcellular location is the endoplasmic reticulum membrane. The catalysed reaction is a very-long-chain (3R)-3-hydroxyacyl-CoA + NADP(+) = a very-long-chain 3-oxoacyl-CoA + NADPH + H(+). It functions in the pathway lipid metabolism; fatty acid biosynthesis. In terms of biological role, component of the microsomal membrane bound fatty acid elongation system, which produces the 26-carbon very long-chain fatty acids (VLCFA) from palmitate. Catalyzes the reduction of the 3-ketoacyl-CoA intermediate that is formed in each cycle of fatty acid elongation. VLCFAs serve as precursors for ceramide and sphingolipids. The polypeptide is Very-long-chain 3-oxoacyl-CoA reductase (Meyerozyma guilliermondii (strain ATCC 6260 / CBS 566 / DSM 6381 / JCM 1539 / NBRC 10279 / NRRL Y-324) (Yeast)).